Consider the following 251-residue polypeptide: Probable metal-binding protein YrpE (251 aa).

An N-terminal signal peptide occupies residues 1–30; that stretch reads MNILFSKRLGILTIGSLLVLAGCQTSGSSA. The span at 25-41 shows a compositional bias: polar residues; the sequence is TSGSSAGESNQTTSSSA. A disordered region spans residues 25–72; the sequence is TSGSSAGESNQTTSSSAVEEDSSKTQEQTSDSHTHEHSHDHSHAHDEE. Basic and acidic residues predominate over residues 54–72; sequence SDSHTHEHSHDHSHAHDEE. The Zn(2+) site is built by H203, H212, H214, E247, and H251.

The protein belongs to the calycin superfamily. ZinT family.

In Bacillus subtilis (strain 168), this protein is Probable metal-binding protein YrpE (yrpE).